Here is a 99-residue protein sequence, read N- to C-terminus: MEIAVIGNSDAVIGFSLAGIKKAYEATSEEELINKINEVMADPNVGILVLHQNDYNRLPKRLQSTLSNSVRPTVIAIGTEQSTEMREKIKRAIGVDLWK.

It belongs to the V-ATPase F subunit family. As to quaternary structure, has multiple subunits with at least A(3), B(3), C, D, E, F, H, I and proteolipid K(x).

It localises to the cell membrane. Component of the A-type ATP synthase that produces ATP from ADP in the presence of a proton gradient across the membrane. This chain is A-type ATP synthase subunit F, found in Methanothrix thermoacetophila (strain DSM 6194 / JCM 14653 / NBRC 101360 / PT) (Methanosaeta thermophila).